We begin with the raw amino-acid sequence, 1071 residues long: Carbamoyl phosphate synthase large chain (1071 aa).

Positions 1–403 (MPKRTDLKSI…SFQKALRGLE (403 aa)) are carboxyphosphate synthetic domain. 12 residues coordinate ATP: Arg129, Arg169, Gly175, Gly176, Gln208, Val210, Glu215, Gly241, Val242, His243, Gln285, and Glu299. Residues 133–328 (KEAMEKIGLS…IAKVAAKLAV (196 aa)) form the ATP-grasp 1 domain. Residues Gln285, Glu299, and Asn301 each coordinate Mg(2+). Residues Gln285, Glu299, and Asn301 each contribute to the Mn(2+) site. The segment at 404-548 (TGLCGFNPRS…YSTYEEECES (145 aa)) is oligomerization domain. The carbamoyl phosphate synthetic domain stretch occupies residues 549-930 (RPSDRKKVMI…AYYKAQLGAG (382 aa)). Residues 673 to 864 (QKVLNDLGLR…LAKVGARCMA (192 aa)) enclose the ATP-grasp 2 domain. Positions 709, 748, 750, 755, 780, 781, 782, 783, 823, and 835 each coordinate ATP. The Mg(2+) site is built by Gln823, Glu835, and Asn837. Gln823, Glu835, and Asn837 together coordinate Mn(2+). The MGS-like domain occupies 931–1071 (ERLNPTGKIF…ELHGRLKNRN (141 aa)). The allosteric domain stretch occupies residues 931–1071 (ERLNPTGKIF…ELHGRLKNRN (141 aa)).

This sequence belongs to the CarB family. In terms of assembly, composed of two chains; the small (or glutamine) chain promotes the hydrolysis of glutamine to ammonia, which is used by the large (or ammonia) chain to synthesize carbamoyl phosphate. Tetramer of heterodimers (alpha,beta)4. Mg(2+) is required as a cofactor. The cofactor is Mn(2+).

The enzyme catalyses hydrogencarbonate + L-glutamine + 2 ATP + H2O = carbamoyl phosphate + L-glutamate + 2 ADP + phosphate + 2 H(+). It catalyses the reaction hydrogencarbonate + NH4(+) + 2 ATP = carbamoyl phosphate + 2 ADP + phosphate + 2 H(+). The protein operates within amino-acid biosynthesis; L-arginine biosynthesis; carbamoyl phosphate from bicarbonate: step 1/1. It functions in the pathway pyrimidine metabolism; UMP biosynthesis via de novo pathway; (S)-dihydroorotate from bicarbonate: step 1/3. Functionally, large subunit of the glutamine-dependent carbamoyl phosphate synthetase (CPSase). CPSase catalyzes the formation of carbamoyl phosphate from the ammonia moiety of glutamine, carbonate, and phosphate donated by ATP, constituting the first step of 2 biosynthetic pathways, one leading to arginine and/or urea and the other to pyrimidine nucleotides. The large subunit (synthetase) binds the substrates ammonia (free or transferred from glutamine from the small subunit), hydrogencarbonate and ATP and carries out an ATP-coupled ligase reaction, activating hydrogencarbonate by forming carboxy phosphate which reacts with ammonia to form carbamoyl phosphate. This Neisseria meningitidis serogroup B (strain ATCC BAA-335 / MC58) protein is Carbamoyl phosphate synthase large chain.